A 308-amino-acid polypeptide reads, in one-letter code: Ribonuclease Z (308 aa).

Zn(2+)-binding residues include His-63, His-65, Asp-67, His-68, His-140, Asp-211, and His-269. Asp-67 functions as the Proton acceptor in the catalytic mechanism.

Belongs to the RNase Z family. As to quaternary structure, homodimer. Zn(2+) is required as a cofactor.

The catalysed reaction is Endonucleolytic cleavage of RNA, removing extra 3' nucleotides from tRNA precursor, generating 3' termini of tRNAs. A 3'-hydroxy group is left at the tRNA terminus and a 5'-phosphoryl group is left at the trailer molecule.. Zinc phosphodiesterase, which displays some tRNA 3'-processing endonuclease activity. Probably involved in tRNA maturation, by removing a 3'-trailer from precursor tRNA. The polypeptide is Ribonuclease Z (Bacillus velezensis (strain DSM 23117 / BGSC 10A6 / LMG 26770 / FZB42) (Bacillus amyloliquefaciens subsp. plantarum)).